A 354-amino-acid chain; its full sequence is MNGTEGPNFYVPMSNKTGVVRSPFDYPQYYLAEPWQYSALAAYMFLLILLGLPINFMTLFVTIQHKKLRTPLNYILLNLVFANHFMVLCGFTVTMYTSMHGYFIFGPTGCYIEGFFATLGGEVALWSLVVLAVERYIVVCKPMANFRFGENHAIMGVAFTWIMALSCAAPPLFGWSRYIPEGMQCSCGVDYYTLKPEVNNESFVIYMFIVHFTIPLIVIFFCYGRLLCTVKEAAAQQQESLTTQKAEKEVTRMVVIMVVFFLICWVPYAYVAFYIFTHQGSNFGPVFMTVPAFFAKSSAIYNPVIYIVLNKQFRNCLITTLCCGKNPFGDEDGSSAATSKTEASSVSSSQVSPA.

At 1 to 36 the chain is on the extracellular side; it reads MNGTEGPNFYVPMSNKTGVVRSPFDYPQYYLAEPWQ. 2 N-linked (GlcNAc...) asparagine glycosylation sites follow: N2 and N15. A helical membrane pass occupies residues 37-61; it reads YSALAAYMFLLILLGLPINFMTLFV. Residues 62–73 lie on the Cytoplasmic side of the membrane; it reads TIQHKKLRTPLN. A helical transmembrane segment spans residues 74–96; it reads YILLNLVFANHFMVLCGFTVTMY. The Extracellular segment spans residues 97-110; it reads TSMHGYFIFGPTGC. A disulfide bridge connects residues C110 and C187. The helical transmembrane segment at 111 to 133 threads the bilayer; the sequence is YIEGFFATLGGEVALWSLVVLAV. Positions 134–136 match the 'Ionic lock' involved in activated form stabilization motif; the sequence is ERY. Residues 134–152 lie on the Cytoplasmic side of the membrane; it reads ERYIVVCKPMANFRFGENH. Residues 153–173 traverse the membrane as a helical segment; it reads AIMGVAFTWIMALSCAAPPLF. Over 174–202 the chain is Extracellular; sequence GWSRYIPEGMQCSCGVDYYTLKPEVNNES. A helical membrane pass occupies residues 203 to 224; sequence FVIYMFIVHFTIPLIVIFFCYG. The Cytoplasmic portion of the chain corresponds to 225 to 252; it reads RLLCTVKEAAAQQQESLTTQKAEKEVTR. The chain crosses the membrane as a helical span at residues 253–274; that stretch reads MVVIMVVFFLICWVPYAYVAFY. Topologically, residues 275–286 are extracellular; that stretch reads IFTHQGSNFGPV. A helical membrane pass occupies residues 287–308; it reads FMTVPAFFAKSSAIYNPVIYIV. K296 is modified (N6-(retinylidene)lysine). The Cytoplasmic portion of the chain corresponds to 309–354; that stretch reads LNKQFRNCLITTLCCGKNPFGDEDGSSAATSKTEASSVSSSQVSPA. Residues C322 and C323 are each lipidated (S-palmitoyl cysteine). Residues 331-354 form a disordered region; sequence EDGSSAATSKTEASSVSSSQVSPA. The span at 334–354 shows a compositional bias: low complexity; the sequence is SSAATSKTEASSVSSSQVSPA.

This sequence belongs to the G-protein coupled receptor 1 family. Opsin subfamily. In terms of processing, contains one covalently linked retinal chromophore. Upon light absorption, the covalently bound 11-cis-retinal is converted to all-trans-retinal. After hydrolysis of the Schiff base and release of the covalently bound all-trans-retinal, active rhodopsin is regenerated by binding of a fresh molecule of 11-cis-retinal.

Its subcellular location is the membrane. The protein resides in the cell projection. It is found in the cilium. The protein localises to the photoreceptor outer segment. Its function is as follows. Photoreceptor required for image-forming vision at low light intensity. Required for photoreceptor cell viability after birth. Light-induced isomerization of 11-cis to all-trans retinal triggers a conformational change that activates signaling via G-proteins. Subsequent receptor phosphorylation mediates displacement of the bound G-protein alpha subunit by arrestin and terminates signaling. This chain is Rhodopsin (rho), found in Xenopus laevis (African clawed frog).